We begin with the raw amino-acid sequence, 510 residues long: Bifunctional pantoate ligase/cytidylate kinase (510 aa).

The segment at 1-276 is pantoate--beta-alanine ligase; sequence MKKVIIRKTE…CGETRLIDHV (276 aa). 29–36 provides a ligand contact to ATP; it reads MGNLHNGH. The Proton donor role is filled by His36. Gln61 is a binding site for (R)-pantoate. Gln61 is a binding site for beta-alanine. 150-153 lines the ATP pocket; sequence GEKD. Gln156 serves as a coordination point for (R)-pantoate. ATP is bound at residue 187-190; it reads LSSR. The segment at 277 to 510 is cytidylate kinase; sequence FLMKRSPIIA…DKIPKETQIR (234 aa).

This sequence in the N-terminal section; belongs to the pantothenate synthetase family. In the C-terminal section; belongs to the cytidylate kinase family. Type 1 subfamily.

It localises to the cytoplasm. The enzyme catalyses (R)-pantoate + beta-alanine + ATP = (R)-pantothenate + AMP + diphosphate + H(+). It carries out the reaction CMP + ATP = CDP + ADP. It catalyses the reaction dCMP + ATP = dCDP + ADP. The protein operates within cofactor biosynthesis; (R)-pantothenate biosynthesis; (R)-pantothenate from (R)-pantoate and beta-alanine: step 1/1. Catalyzes the condensation of pantoate with beta-alanine in an ATP-dependent reaction via a pantoyl-adenylate intermediate. Its function is as follows. Catalyzes the transfer of a phosphate group from ATP to either CMP or dCMP to form CDP or dCDP and ADP, respectively. This is Bifunctional pantoate ligase/cytidylate kinase from Prochlorococcus marinus (strain MIT 9312).